The primary structure comprises 430 residues: Phosphomethylpyrimidine synthase (430 aa).

Substrate contacts are provided by residues Asn67, Met96, Tyr125, His161, 183-185 (SRG), 224-227 (DALR), and Glu263. His267 is a binding site for Zn(2+). A substrate-binding site is contributed by Tyr290. His331 contributes to the Zn(2+) binding site. Cys406, Cys409, and Cys413 together coordinate [4Fe-4S] cluster.

Belongs to the ThiC family. In terms of assembly, homodimer. It depends on [4Fe-4S] cluster as a cofactor.

It catalyses the reaction 5-amino-1-(5-phospho-beta-D-ribosyl)imidazole + S-adenosyl-L-methionine = 4-amino-2-methyl-5-(phosphooxymethyl)pyrimidine + CO + 5'-deoxyadenosine + formate + L-methionine + 3 H(+). The protein operates within cofactor biosynthesis; thiamine diphosphate biosynthesis. Functionally, catalyzes the synthesis of the hydroxymethylpyrimidine phosphate (HMP-P) moiety of thiamine from aminoimidazole ribotide (AIR) in a radical S-adenosyl-L-methionine (SAM)-dependent reaction. The protein is Phosphomethylpyrimidine synthase of Campylobacter jejuni subsp. jejuni serotype O:2 (strain ATCC 700819 / NCTC 11168).